Here is a 902-residue protein sequence, read N- to C-terminus: 4-hydroxyphenylacetate decarboxylase glycyl radical subunit (902 aa).

The region spanning 38-774 (KRAEDLLDVY…ATLATPDGRL (737 aa)) is the PFL domain. 2 residues coordinate 4-hydroxyphenylacetate: Ser348 and Cys507. Cys507 functions as the Cysteine radical intermediate in the catalytic mechanism. The active-site Proton donor is the Glu509. 4-hydroxyphenylacetate-binding residues include His540 and Glu641. One can recognise a Glycine radical domain in the interval 782–902 (GSVSAYAGTD…VIARTEYEGV (121 aa)). Position 877 is a glycine radical (Gly877).

The protein belongs to the glycyl radical enzyme (GRE) family. HPAD subfamily. In terms of assembly, heterooctamer consisting of 4 large (HpdB) subunits and 4 small (HpdC) subunits, arranged as a tetramer of heterodimers. Also forms a catalytically inactive homodimer. In terms of processing, requires the activating protein CsdA to generate the key active site glycyl radical that is involved in catalysis. Post-translationally, phosphorylated on serine. Phosphorylation may trigger the formation of the active heterooctamers and thereby regulates enzyme activity.

It catalyses the reaction 4-hydroxyphenylacetate + H(+) = 4-methylphenol + CO2. It carries out the reaction 3,4-dihydroxyphenylacetate + H(+) = 4-methylcatechol + CO2. Glycyl radical subunit of the HPA decarboxylase that decarboxylates phenylacetates with a hydroxyl group in the p-position. Active toward 4-hydroxyphenylacetate and 3,4-dihydroxyphenylacetate, forming 4-methylphenol and 4-methylcatechol, respectively. Is likely involved in the catabolism of aromatic amino acids such as tyrosine fermentation. 4-methylphenol (p-cresol) formation provides metabolic toxicity, which allows an active suppression of other microbes and may provide growth advantages for the producers in highly competitive environments. The large subunit is the catalytic subunit that binds the substrate. This is 4-hydroxyphenylacetate decarboxylase glycyl radical subunit from Clostridioides difficile (strain 630) (Peptoclostridium difficile).